The following is a 334-amino-acid chain: Glyceraldehyde-3-phosphate dehydrogenase (334 aa).

Residues 12–13 (TI) and Gly111 each bind NAD(+). 140-142 (SCN) provides a ligand contact to D-glyceraldehyde 3-phosphate. Cys141 functions as the Nucleophile in the catalytic mechanism. NAD(+) is bound at residue Arg167. 192–193 (HG) serves as a coordination point for D-glyceraldehyde 3-phosphate. Gln298 contacts NAD(+).

The protein belongs to the glyceraldehyde-3-phosphate dehydrogenase family. In terms of assembly, homotetramer.

The protein resides in the encapsulin nanocompartment. It carries out the reaction D-glyceraldehyde 3-phosphate + phosphate + NADP(+) = (2R)-3-phospho-glyceroyl phosphate + NADPH + H(+). The enzyme catalyses D-glyceraldehyde 3-phosphate + phosphate + NAD(+) = (2R)-3-phospho-glyceroyl phosphate + NADH + H(+). It functions in the pathway carbohydrate degradation; glycolysis; pyruvate from D-glyceraldehyde 3-phosphate: step 1/5. Functionally, possible cargo protein of a type 4B encapsulin nanocompartment. Active in the presence of NAD and NADP, prefers NADP. This chain is Glyceraldehyde-3-phosphate dehydrogenase (gap), found in Pyrococcus furiosus (strain ATCC 43587 / DSM 3638 / JCM 8422 / Vc1).